Here is a 712-residue protein sequence, read N- to C-terminus: Polyribonucleotide nucleotidyltransferase (712 aa).

Asp493 and Asp499 together coordinate Mg(2+). The KH domain occupies 560 to 619; the sequence is PRLLTFKVDPEDIGKIIGPGGKMVRSITEATGAKVDISDDGTITVSSSVGGQAEAARAMI. An S1 motif domain is found at 629 to 697; that stretch reads GQVYLGKVTR…HKGRVNLTRL (69 aa).

The protein belongs to the polyribonucleotide nucleotidyltransferase family. It depends on Mg(2+) as a cofactor.

The protein localises to the cytoplasm. The enzyme catalyses RNA(n+1) + phosphate = RNA(n) + a ribonucleoside 5'-diphosphate. Its function is as follows. Involved in mRNA degradation. Catalyzes the phosphorolysis of single-stranded polyribonucleotides processively in the 3'- to 5'-direction. The protein is Polyribonucleotide nucleotidyltransferase of Synechococcus sp. (strain JA-3-3Ab) (Cyanobacteria bacterium Yellowstone A-Prime).